Reading from the N-terminus, the 198-residue chain is Probable GTP-binding protein EngB (198 aa).

Residues 22-195 (DLPEIALAGR…WKAIHKFTKT (174 aa)) form the EngB-type G domain. GTP-binding positions include 30-37 (GRSNVGKS), 57-61 (GKTQT), 75-78 (DVPG), 142-145 (TKAD), and 174-176 (FSS). S37 and T59 together coordinate Mg(2+).

The protein belongs to the TRAFAC class TrmE-Era-EngA-EngB-Septin-like GTPase superfamily. EngB GTPase family. It depends on Mg(2+) as a cofactor.

Its function is as follows. Necessary for normal cell division and for the maintenance of normal septation. In Bacillus anthracis (strain A0248), this protein is Probable GTP-binding protein EngB.